The chain runs to 514 residues: MNNTFKYVNEDVSGTEGEESDYDPSEFIRGYHESPRSPRLIDYEMGRGLMGNFKGLGINKVRQSNEYDNDTDYSSRKSSKIINDVIHGHMEVPDYIMDFIDTEQFQRLRDLKQVGTTSFVFPCASHSRFEHSIGVSHLAGKYIDRIKVTQPELEITEREQKFVRIAGLCHDLGHGPFSHAFESWVDQLGGSKRFHHEDMSIKMLNWIIDDHGLDEYDSDDIKFISSLIQGKHRPKERAFIYDIVANNRNSVDVDKFDYLSRDSYYLGRSTVCDFQRLMEFSKVIDDQICFLSKEIYNLYELFHTRYSLHKLVYTHKVGKSIEFMIADAFTEADQFLKISDQLEDPKEFINLSDSLLRRIETSKEPELEKSRKIIKNIRNRNLYKFVDEIIVSTDKIRWSADSLAEDIAKVGNGILESDIIVQNLKLNYAFKDKDPVQSTRFYTRYDSTQSFTIKKEETSHLIPNQFQEERIRIFCRSKEKCEQVQTAFRKLLKNHNLSPNPSFTVSPARNIKKI.

Positions 1-24 (MNNTFKYVNEDVSGTEGEESDYDP) are disordered. A GTP-binding site is contributed by Lys-80. A 2'-deoxyribonucleoside 5'-triphosphate is bound at residue Asn-83. 101–109 (DTEQFQRLR) is a GTP binding site. Residues Gln-113 and Arg-128 each coordinate substrate. The HD domain occupies 128–259 (RFEHSIGVSH…SVDVDKFDYL (132 aa)). Positions 131, 170, and 171 each coordinate Zn(2+). Position 174 (His-174) interacts with substrate. Residue His-196 is part of the active site. Substrate contacts are provided by residues 252–258 (DVDKFDY), Tyr-258, and Asp-262. Asp-254 is a binding site for Zn(2+). Residues Arg-276, 291-293 (LSK), and Asn-297 contribute to the a 2'-deoxyribonucleoside 5'-triphosphate site. Substrate is bound by residues Arg-305 and 309–314 (HKLVYT). Residues His-315 and Lys-316 each contribute to the a 2'-deoxyribonucleoside 5'-triphosphate site. Arg-380 and Lys-384 together coordinate GTP.

The protein belongs to the SAMHD1 family. Homodimer; in absence of GTP and dNTP. Homotetramer; in GTP- and dNTP-bound form. Requires Zn(2+) as cofactor.

The catalysed reaction is a 2'-deoxyribonucleoside 5'-triphosphate + H2O = a 2'-deoxyribonucleoside + triphosphate + H(+). With respect to regulation, allosterically activated and regulated via the combined actions of GTP and dNTPs (dATP, dGTP, dTTP and dCTP): Allosteric site 1 binds GTP, while allosteric site 2 binds dNTP. Allosteric activation promotes the formation of highly active homotetramers. Functionally, has deoxynucleoside triphosphate (dNTPase) activity. The polypeptide is Deoxynucleoside triphosphate triphosphohydrolase SAMHD1 homolog (Dictyostelium discoideum (Social amoeba)).